The following is a 245-amino-acid chain: Fibroblast growth factor-binding protein 3 (245 aa).

The N-terminal stretch at 1–28 (MSPPRPRASLSPLTLLLLLGGCLLSAAG) is a signal peptide. The segment at 33–52 (AAGREVTRASRPTVGSSGRF) is disordered. Disulfide bonds link cysteine 60-cysteine 81 and cysteine 91-cysteine 125. Residues 136–216 (CARKTAGSDL…PAAAGFQPNG (81 aa)) are disordered. Residues 170–180 (RSRQSVRSPSS) show a composition bias toward low complexity. Cysteine 228 and cysteine 236 form a disulfide bridge.

The protein belongs to the fibroblast growth factor-binding protein family. Interacts with FGF2. In the adult, highly expressed in brain with lower levels in ovary. In the embryo, highest levels are found in the brain and spinal cord at 14 dpc and expression is almost completely restricted to the brain by 18 dpc. In the adult and postnatal brain, highly expressed in the orbitofrontal cortex where it is concentrated primarily in differentiated neurons.

The protein localises to the secreted. Functionally, heparin-binding protein which binds to FGF2, prevents binding of FGF2 to heparin and probably inhibits immobilization of FGF2 on extracellular matrix glycosaminoglycans, allowing its release and subsequent activation of FGFR signaling which leads to increased vascular permeability. The chain is Fibroblast growth factor-binding protein 3 (Fgfbp3) from Mus musculus (Mouse).